The chain runs to 489 residues: Pup--protein ligase (489 aa).

A Mg(2+)-binding site is contributed by Glu25. Position 69 (Arg69) interacts with ATP. Tyr71 contacts Mg(2+). Asp73 acts as the Proton acceptor in catalysis. Glu79 contributes to the Mg(2+) binding site. ATP is bound by residues Thr82 and Trp447.

The protein belongs to the Pup ligase/Pup deamidase family. Pup-conjugating enzyme subfamily.

It catalyses the reaction ATP + [prokaryotic ubiquitin-like protein]-L-glutamate + [protein]-L-lysine = ADP + phosphate + N(6)-([prokaryotic ubiquitin-like protein]-gamma-L-glutamyl)-[protein]-L-lysine.. It participates in protein degradation; proteasomal Pup-dependent pathway. Its pathway is protein modification; protein pupylation. Functionally, catalyzes the covalent attachment of the prokaryotic ubiquitin-like protein modifier Pup to the proteasomal substrate proteins, thereby targeting them for proteasomal degradation. This tagging system is termed pupylation. The ligation reaction involves the side-chain carboxylate of the C-terminal glutamate of Pup and the side-chain amino group of a substrate lysine. This is Pup--protein ligase from Corynebacterium efficiens (strain DSM 44549 / YS-314 / AJ 12310 / JCM 11189 / NBRC 100395).